The sequence spans 88 residues: Class I hydrophobin F (88 aa).

The signal sequence occupies residues 1–21; sequence MLSRLFTVPAILLATLGSAAT. Intrachain disulfides connect cysteine 30/cysteine 67, cysteine 34/cysteine 58, cysteine 35/cysteine 51, and cysteine 68/cysteine 84.

This sequence belongs to the fungal hydrophobin family.

The protein resides in the secreted. It localises to the cell wall. It is found in the vacuole. The protein localises to the cytoplasmic vesicle. In terms of biological role, aerial growth, conidiation, and dispersal of filamentous fungi in the environment rely upon a capability of their secreting small amphipathic proteins called hydrophobins (HPBs) with low sequence identity. Class I can self-assemble into an outermost layer of rodlet bundles on aerial cell surfaces, conferring cellular hydrophobicity that supports fungal growth, development and dispersal; whereas Class II form highly ordered films at water-air interfaces through intermolecular interactions but contribute nothing to the rodlet structure. Hyd1F contributes to certain cell wall-related features, such as hydrophobicity but is not involved in cell wall-related events during fungal proliferation in host hemocoel. Does not contribute to conidial hydrophobicity. In Beauveria bassiana (strain ARSEF 2860) (White muscardine disease fungus), this protein is Class I hydrophobin F.